The chain runs to 457 residues: MSGFTNKDGRQNLAPCFNFRSSPFRLTVGERELKLEEDKNQLSKGLDPWTSNPTASASTLHYLLQEKERAQQAHEQLQIYQQQQGFGSFLQHRIRQPASRGPGGGGGGGDGGGSSGESTPVDALATAFGAGRIVRSAAGRKDRHSKVCTARGLRDRRVRLAAHTAIRFYDVQDRLGYDRPSKAVDWLMRNAKAAIDELPDRAEAPPPPAAASTEQPEGTEQANSTSYGFGNTTGGTMTSAASAAAGSFLPHSLGADRVSDSVKSLFPSSSTASGAASAGHDEYRGSPPDLLSRTTSNQQPQELCLTLQSNQHQIFSHVSSNHHGMISSAGVPGWPDHSQRMQAWHAPENSTGDGRGGGNGDGYMFAMPSRQGLDQSQLFSHGEPLQSSGRGWASARAWLDPLAVAAIHHQPSTMAAGQVGFGHLVGGAGGGGGFMGFLAPAAQRLEGEEEHGSEVIR.

Residues 58 to 84 (STLHYLLQEKERAQQAHEQLQIYQQQQ) are a coiled coil. Positions 95 to 121 (RQPASRGPGGGGGGGDGGGSSGESTPV) are disordered. The segment covering 101–115 (GPGGGGGGGDGGGSS) has biased composition (gly residues). The 59-residue stretch at 140 to 198 (RKDRHSKVCTARGLRDRRVRLAAHTAIRFYDVQDRLGYDRPSKAVDWLMRNAKAAIDEL) folds into the TCP domain. Disordered regions lie at residues 199-231 (PDRA…GFGN) and 263-299 (KSLF…SNQQ). The span at 212–230 (STEQPEGTEQANSTSYGFG) shows a compositional bias: polar residues. Residues 268-278 (SSSTASGAASA) are compositionally biased toward low complexity.

Forms homodimers and heterodimers.

It is found in the nucleus. Functionally, transcription activator. Binds the promoter core sequence 5'-GGNCC-3'. This Oryza sativa subsp. indica (Rice) protein is Transcription factor PCF7 (PCF7).